We begin with the raw amino-acid sequence, 124 residues long: UPF0102 protein Noc_0355 (124 aa).

This sequence belongs to the UPF0102 family.

In Nitrosococcus oceani (strain ATCC 19707 / BCRC 17464 / JCM 30415 / NCIMB 11848 / C-107), this protein is UPF0102 protein Noc_0355.